The primary structure comprises 750 residues: Serine/threonine-protein kinase PknG (750 aa).

A disordered region spans residues 1-66 (MAKASETERS…PQDRMATTSR (66 aa)). The span at 17–34 (ADAQTATSATVRPLSTQA) shows a compositional bias: polar residues. A Protein kinase domain is found at 151–396 (YEVKGCIAHG…EMSAQLTGVL (246 aa)). ATP-binding positions include 157–165 (IAHGGLGWI) and lysine 181. Aspartate 276 (proton acceptor) is an active-site residue.

Belongs to the protein kinase superfamily. Ser/Thr protein kinase family. Autophosphorylated.

The enzyme catalyses L-seryl-[protein] + ATP = O-phospho-L-seryl-[protein] + ADP + H(+). The catalysed reaction is L-threonyl-[protein] + ATP = O-phospho-L-threonyl-[protein] + ADP + H(+). This is Serine/threonine-protein kinase PknG (pknG) from Mycobacterium bovis (strain ATCC BAA-935 / AF2122/97).